A 259-amino-acid chain; its full sequence is Triosephosphate isomerase (259 aa).

10–12 (NWK) is a binding site for substrate. His102 functions as the Electrophile in the catalytic mechanism. Glu174 functions as the Proton acceptor in the catalytic mechanism. Substrate-binding positions include Gly180, Ser220, and 241–242 (GG).

Belongs to the triosephosphate isomerase family. As to quaternary structure, homodimer.

It localises to the cytoplasm. The enzyme catalyses D-glyceraldehyde 3-phosphate = dihydroxyacetone phosphate. The protein operates within carbohydrate biosynthesis; gluconeogenesis. It participates in carbohydrate degradation; glycolysis; D-glyceraldehyde 3-phosphate from glycerone phosphate: step 1/1. Functionally, involved in the gluconeogenesis. Catalyzes stereospecifically the conversion of dihydroxyacetone phosphate (DHAP) to D-glyceraldehyde-3-phosphate (G3P). This chain is Triosephosphate isomerase, found in Cutibacterium acnes (strain DSM 16379 / KPA171202) (Propionibacterium acnes).